Consider the following 122-residue polypeptide: Hydrogenase maturation factor HypA (122 aa).

A Ni(2+)-binding site is contributed by His-2. Zn(2+) is bound by residues Cys-73, Cys-75, Cys-95, and Cys-98.

This sequence belongs to the HypA/HybF family.

In terms of biological role, involved in the maturation of [NiFe] hydrogenases. Required for nickel insertion into the metal center of the hydrogenase. This chain is Hydrogenase maturation factor HypA, found in Methanothermobacter thermautotrophicus (strain ATCC 29096 / DSM 1053 / JCM 10044 / NBRC 100330 / Delta H) (Methanobacterium thermoautotrophicum).